The sequence spans 191 residues: UPF0149 protein VS_2635 (191 aa).

This sequence belongs to the UPF0149 family.

This Vibrio atlanticus (strain LGP32) (Vibrio splendidus (strain Mel32)) protein is UPF0149 protein VS_2635.